The following is a 73-amino-acid chain: Large ribosomal subunit protein bL31 (73 aa).

Zn(2+)-binding residues include Cys16, Cys18, Cys37, and Cys40.

Belongs to the bacterial ribosomal protein bL31 family. Type A subfamily. In terms of assembly, part of the 50S ribosomal subunit. Zn(2+) is required as a cofactor.

In terms of biological role, binds the 23S rRNA. In Pseudomonas fluorescens (strain ATCC BAA-477 / NRRL B-23932 / Pf-5), this protein is Large ribosomal subunit protein bL31.